The following is a 304-amino-acid chain: Oxygen-dependent coproporphyrinogen-III oxidase (304 aa).

Substrate is bound at residue Ser-93. A divalent metal cation-binding residues include His-97 and His-107. His-107 (proton donor) is an active-site residue. Residue 109–111 (NVR) participates in substrate binding. A divalent metal cation-binding residues include His-146 and His-176. The segment at 241-276 (YVEFNLVYDRGTLFGLQSGGRTESILMSLPPQVRWA) is important for dimerization. Position 259-261 (259-261 (GGR)) interacts with substrate.

Belongs to the aerobic coproporphyrinogen-III oxidase family. As to quaternary structure, homodimer. A divalent metal cation is required as a cofactor.

Its subcellular location is the cytoplasm. The catalysed reaction is coproporphyrinogen III + O2 + 2 H(+) = protoporphyrinogen IX + 2 CO2 + 2 H2O. It functions in the pathway porphyrin-containing compound metabolism; protoporphyrin-IX biosynthesis; protoporphyrinogen-IX from coproporphyrinogen-III (O2 route): step 1/1. Involved in the heme biosynthesis. Catalyzes the aerobic oxidative decarboxylation of propionate groups of rings A and B of coproporphyrinogen-III to yield the vinyl groups in protoporphyrinogen-IX. This is Oxygen-dependent coproporphyrinogen-III oxidase from Pseudomonas fluorescens (strain Pf0-1).